Reading from the N-terminus, the 144-residue chain is Ethylene-responsive transcription factor ERF019 (144 aa).

Positions 13–72 (KYKGIRRRKWGKWVSEIRVPGTRDRLWLGSFSTAEGAAVAHDVAFFCLHQPDSLESLNFP) form a DNA-binding region, AP2/ERF.

This sequence belongs to the AP2/ERF transcription factor family. ERF subfamily.

The protein localises to the nucleus. Its function is as follows. Probably acts as a transcriptional activator. Binds to the GCC-box pathogenesis-related promoter element. May be involved in the regulation of gene expression by stress factors and by components of stress signal transduction pathways. This Arabidopsis thaliana (Mouse-ear cress) protein is Ethylene-responsive transcription factor ERF019 (ERF019).